Reading from the N-terminus, the 252-residue chain is 5'-nucleotidase SurE (252 aa).

Residues Asp-8, Asp-9, Ser-39, and Asn-91 each contribute to the a divalent metal cation site.

It belongs to the SurE nucleotidase family. A divalent metal cation serves as cofactor.

The protein resides in the cytoplasm. It carries out the reaction a ribonucleoside 5'-phosphate + H2O = a ribonucleoside + phosphate. Its function is as follows. Nucleotidase that shows phosphatase activity on nucleoside 5'-monophosphates. The sequence is that of 5'-nucleotidase SurE from Legionella pneumophila (strain Paris).